We begin with the raw amino-acid sequence, 205 residues long: Small ribosomal subunit protein uS4 (205 aa).

A compositionally biased stretch (basic and acidic residues) spans 1 to 16; it reads MSKRETTKYKIDRRMG. The disordered stretch occupies residues 1 to 46; the sequence is MSKRETTKYKIDRRMGENIWGRPKSPVNRRDYGPGQHGQRRKGKLS. Positions 94 to 157 constitute an S4 RNA-binding domain; that stretch reads SRLDAVIYRA…KQLVLVLESV (64 aa).

This sequence belongs to the universal ribosomal protein uS4 family. In terms of assembly, part of the 30S ribosomal subunit. Contacts protein S5. The interaction surface between S4 and S5 is involved in control of translational fidelity.

In terms of biological role, one of the primary rRNA binding proteins, it binds directly to 16S rRNA where it nucleates assembly of the body of the 30S subunit. Its function is as follows. With S5 and S12 plays an important role in translational accuracy. This chain is Small ribosomal subunit protein uS4, found in Bartonella quintana (strain Toulouse) (Rochalimaea quintana).